Consider the following 735-residue polypeptide: Disintegrin and metalloproteinase domain-containing protein 2 (735 aa).

A signal peptide spans 1 to 16 (MWRVLFLLSGLGGLRM). Residues 17–174 (DSNFDSLPVQ…FKLQSVEPQQ (158 aa)) constitute a propeptide that is removed on maturation. Asn-122 and Asn-220 each carry an N-linked (GlcNAc...) asparagine glycan. The Extracellular portion of the chain corresponds to 175–686 (DFAKYIEMHV…ENIYHSKPMR (512 aa)). One can recognise a Peptidase M12B domain in the interval 178-375 (KYIEMHVIVE…QKSQCLHNQP (198 aa)). 4 disulfides stabilise this stretch: Cys-287-Cys-370, Cys-329-Cys-354, Cys-331-Cys-336, and Cys-445-Cys-465. N-linked (GlcNAc...) asparagine glycans are attached at residues Asn-353, Asn-459, and Asn-566. Residues 384 to 473 (QAVCGNAKLE…SCPENHYVQT (90 aa)) form the Disintegrin domain. The EGF-like domain occupies 612–645 (LGYDCTTDKCNDRGVCNNKKHCHCSASYLPPDCS). 3 disulfide bridges follow: Cys-616–Cys-627, Cys-621–Cys-633, and Cys-635–Cys-644. The helical transmembrane segment at 687 to 707 (WPFFLFIPFFIIFCVLIAIMV) threads the bilayer. Over 708–735 (KVNFQRKKWRTEDYSSDEQPESESEPKG) the chain is Cytoplasmic. Residue Ser-729 is modified to Phosphoserine.

In terms of processing, the prodomain and the metalloprotease domain are cleaved during the epididymal maturation of the spermatozoa. As to expression, expressed specifically in spermatogenic cells in the seminiferous cells. Not detected in fetal tissues.

The protein localises to the membrane. Sperm surface membrane protein that may be involved in sperm-egg plasma membrane adhesion and fusion during fertilization. Could have a direct role in sperm-zona binding or migration of sperm from the uterus into the oviduct. Interactions with egg membrane could be mediated via binding between its disintegrin-like domain to one or more integrins receptors on the egg. This is a non catalytic metalloprotease-like protein. The polypeptide is Disintegrin and metalloproteinase domain-containing protein 2 (ADAM2) (Homo sapiens (Human)).